A 530-amino-acid polypeptide reads, in one-letter code: uncharacterized protein (530 aa).

Residues 1–33 are disordered; that stretch reads MNNMSLKFPDIAINSSESSDDEDPSSKNEKKDG. Basic and acidic residues predominate over residues 24-33; it reads PSSKNEKKDG. A run of 12 helical transmembrane segments spans residues 83–103, 124–144, 147–167, 181–201, 211–231, 244–264, 323–343, 346–366, 375–395, 404–424, 436–456, and 471–491; these read FFIL…KTAV, WLST…GYLL, FPIS…VLLM, FFSG…TAMW, VVSW…LGYG, YPFL…LFFP, VTNA…YSGI, TLLT…SGIF, IPLA…IWKI, VVGV…LSLL, TVNA…PQLF, and SLVS…YYIF.

It belongs to the major facilitator superfamily. Allantoate permease family.

The protein localises to the endoplasmic reticulum. It localises to the membrane. This is an uncharacterized protein from Schizosaccharomyces pombe (strain 972 / ATCC 24843) (Fission yeast).